The primary structure comprises 308 residues: Methionyl-tRNA formyltransferase (308 aa).

Residue 110-113 (SLLP) participates in (6S)-5,6,7,8-tetrahydrofolate binding.

This sequence belongs to the Fmt family.

The enzyme catalyses L-methionyl-tRNA(fMet) + (6R)-10-formyltetrahydrofolate = N-formyl-L-methionyl-tRNA(fMet) + (6S)-5,6,7,8-tetrahydrofolate + H(+). Its function is as follows. Attaches a formyl group to the free amino group of methionyl-tRNA(fMet). The formyl group appears to play a dual role in the initiator identity of N-formylmethionyl-tRNA by promoting its recognition by IF2 and preventing the misappropriation of this tRNA by the elongation apparatus. The sequence is that of Methionyl-tRNA formyltransferase from Neisseria meningitidis serogroup A / serotype 4A (strain DSM 15465 / Z2491).